The following is a 244-amino-acid chain: Glucosamine-6-phosphate deaminase (244 aa).

Residue D67 is the Proton acceptor; for enolization step of the active site. The For ring-opening step role is filled by N133. H135 (proton acceptor; for ring-opening step) is an active-site residue. E140 acts as the For ring-opening step in catalysis.

The protein belongs to the glucosamine/galactosamine-6-phosphate isomerase family. NagB subfamily.

The catalysed reaction is alpha-D-glucosamine 6-phosphate + H2O = beta-D-fructose 6-phosphate + NH4(+). It functions in the pathway amino-sugar metabolism; N-acetylneuraminate degradation; D-fructose 6-phosphate from N-acetylneuraminate: step 5/5. In terms of biological role, catalyzes the reversible isomerization-deamination of glucosamine 6-phosphate (GlcN6P) to form fructose 6-phosphate (Fru6P) and ammonium ion. In Mycoplasma mycoides subsp. mycoides SC (strain CCUG 32753 / NCTC 10114 / PG1), this protein is Glucosamine-6-phosphate deaminase.